We begin with the raw amino-acid sequence, 355 residues long: D-alanine--D-alanine ligase (355 aa).

The 208-residue stretch at 143–350 folds into the ATP-grasp domain; that stretch reads KKIFSHLEIP…IDQLVAKLVD (208 aa). Residue 178 to 233 coordinates ATP; sequence IEKLKLPVFVKPANSGSSLGISKAKTRSEIIKALQKAWEIDSRIVIEEGLDVRELE. Positions 303, 317, and 319 each coordinate Mg(2+).

It belongs to the D-alanine--D-alanine ligase family. It depends on Mg(2+) as a cofactor. The cofactor is Mn(2+).

The protein localises to the cytoplasm. It catalyses the reaction 2 D-alanine + ATP = D-alanyl-D-alanine + ADP + phosphate + H(+). It participates in cell wall biogenesis; peptidoglycan biosynthesis. In terms of biological role, cell wall formation. In Prochlorococcus marinus subsp. pastoris (strain CCMP1986 / NIES-2087 / MED4), this protein is D-alanine--D-alanine ligase.